Consider the following 116-residue polypeptide: Phycoerythrin alpha-3 subunit (116 aa).

5 residues coordinate (2R,3E)-phycoerythrobilin: S53, E63, R64, C67, and K85.

The protein belongs to the phycoerythrin family. In terms of assembly, heterotetramer of 2 different alpha chains and 2 identical beta chains which form 2 alpha-beta heterodimers within the heterotetramer. The two alpha-beta heterodimers are rotated to an open configuration in contrast to the closed configuration found in other cryptophyte species due to the insertion of a single amino acid, Asp-65, in a conserved region of the alpha chain. In the open form, the central chromophores are not in physical contact but are separated by a water-filled channel. In terms of processing, contains three phycoerythrobilin chromophores with binding mediated by both the alpha and beta subunits.

The protein localises to the plastid. The protein resides in the chloroplast thylakoid membrane. Functionally, light-harvesting photosynthetic tetrapyrrole chromophore-protein from the phycobiliprotein complex. This is Phycoerythrin alpha-3 subunit from Hemiselmis andersenii (Cryptophyte alga).